The chain runs to 250 residues: Mycofactocin precursor peptide peptidase (250 aa).

The a divalent metal cation site is built by glutamate 38, histidine 40, aspartate 49, histidine 127, and glutamate 166.

It belongs to the creatininase superfamily. As to quaternary structure, homooctamer. Requires Fe(2+) as cofactor. Zn(2+) is required as a cofactor.

It catalyses the reaction [mycofactocin precursor peptide]-C-terminal glycyl-N-{5-[(4-hydroxyphenyl)methyl]-4,4-dimethyl-2-oxopyrrolidin-3-yl}acetamide + H2O = [mycofactocin precursor peptide]-C-terminal glycine + 3-amino-5-[(4-hydroxyphenyl)methyl]-4,4-dimethyl-2-pyrrolidin-2-one. Peptidase involved in the biosynthesis of the enzyme cofactor mycofactocin (MFT). Catalyzes cleavage of the MftC-modified MftA peptide to liberate its final two residues, which consist of a cross-linked valine-decarboxylated tyrosine dipeptide (named 3-amino-5-[(4-hydroxyphenyl)methyl]-4,4-dimethyl-2-pyrrolidin-2-one or ADHP). The protein is Mycofactocin precursor peptide peptidase of Mycobacterium ulcerans (strain Agy99).